A 394-amino-acid polypeptide reads, in one-letter code: Large ribosomal subunit protein mL44 (394 aa).

The transit peptide at 1-21 (MFRHVAQNLGSRNTSIQSYRL) directs the protein to the mitochondrion.

It belongs to the ribonuclease III family. Mitochondrion-specific ribosomal protein mL44 subfamily. Component of the mitochondrial large ribosomal subunit (mt-LSU).

Its subcellular location is the mitochondrion. Component of the mitochondrial ribosome. May have a function in the assembly/stability of nascent mitochondrial polypeptides exiting the ribosome. The sequence is that of Large ribosomal subunit protein mL44 from Caenorhabditis elegans.